Reading from the N-terminus, the 276-residue chain is Shikimate dehydrogenase (NADP(+)) (276 aa).

Shikimate is bound by residues 19-21 (SKS) and Thr-66. Lys-70 acts as the Proton acceptor in catalysis. Asp-82 contributes to the NADP(+) binding site. Shikimate-binding residues include Asn-91 and Asp-107. NADP(+) contacts are provided by residues 133–137 (GAGGA), 157–162 (NRTRSR), and Leu-222. Tyr-224 contributes to the shikimate binding site. NADP(+) is bound at residue Gly-245.

The protein belongs to the shikimate dehydrogenase family. As to quaternary structure, homodimer.

The enzyme catalyses shikimate + NADP(+) = 3-dehydroshikimate + NADPH + H(+). The protein operates within metabolic intermediate biosynthesis; chorismate biosynthesis; chorismate from D-erythrose 4-phosphate and phosphoenolpyruvate: step 4/7. Involved in the biosynthesis of the chorismate, which leads to the biosynthesis of aromatic amino acids. Catalyzes the reversible NADPH linked reduction of 3-dehydroshikimate (DHSA) to yield shikimate (SA). This is Shikimate dehydrogenase (NADP(+)) from Ruegeria sp. (strain TM1040) (Silicibacter sp.).